The chain runs to 266 residues: rRNA adenine N-6-methyltransferase (266 aa).

6 residues coordinate S-adenosyl-L-methionine: H14, T16, G41, E62, D87, and N103.

Belongs to the class I-like SAM-binding methyltransferase superfamily. rRNA adenine N(6)-methyltransferase family.

In terms of biological role, involved in erythromycin resistance. The polypeptide is rRNA adenine N-6-methyltransferase (ermFU) (Bacteroides fragilis).